The sequence spans 210 residues: Uracil phosphoribosyltransferase (210 aa).

5-phospho-alpha-D-ribose 1-diphosphate is bound by residues Arg80, Arg105, and 132–140 (DPMLATGGS). Residues Ile195 and 200–202 (GDA) each bind uracil. Residue Asp201 participates in 5-phospho-alpha-D-ribose 1-diphosphate binding.

This sequence belongs to the UPRTase family. Mg(2+) serves as cofactor.

The catalysed reaction is UMP + diphosphate = 5-phospho-alpha-D-ribose 1-diphosphate + uracil. It functions in the pathway pyrimidine metabolism; UMP biosynthesis via salvage pathway; UMP from uracil: step 1/1. Its activity is regulated as follows. Allosterically activated by GTP. In terms of biological role, catalyzes the conversion of uracil and 5-phospho-alpha-D-ribose 1-diphosphate (PRPP) to UMP and diphosphate. The chain is Uracil phosphoribosyltransferase from Thermoanaerobacter pseudethanolicus (strain ATCC 33223 / 39E) (Clostridium thermohydrosulfuricum).